A 75-amino-acid polypeptide reads, in one-letter code: Calhepatin (75 aa).

Ser-1 is modified (N-acetylserine). EF-hand domains lie at 2 to 37 (ADEQKLRERFEALDKDKSGTLSVDELYEGVHAVHPK) and 38 to 73 (VSRNDIVKIIEKVDTNKDGQVSWQEFIEAFKRLADL). Ca(2+) contacts are provided by Asp-15, Asp-17, Ser-19, Thr-21, Glu-26, Asp-51, Asn-53, Asp-55, Gln-57, and Glu-62.

As to quaternary structure, monomer and homodimer. In terms of tissue distribution, liver, and to a much lower level intestine.

Its function is as follows. Binds both calcium and copper, but not zinc. May be involved in calcium signal transduction. In Lepidosiren paradoxus (South American lungfish), this protein is Calhepatin.